A 104-amino-acid chain; its full sequence is Large ribosomal subunit protein bL27 (104 aa).

A propeptide spanning residues 1 to 15 is cleaved from the precursor; that stretch reads MNNKYFLTKIDLQFF.

Belongs to the bacterial ribosomal protein bL27 family. Post-translationally, the N-terminus is cleaved by ribosomal processing cysteine protease Prp.

This Mycoplasma pneumoniae (strain ATCC 29342 / M129 / Subtype 1) (Mycoplasmoides pneumoniae) protein is Large ribosomal subunit protein bL27.